The sequence spans 609 residues: UvrABC system protein C (609 aa).

Positions 15–92 constitute a GIY-YIG domain; it reads TGSGVYQMQD…IKQFRPRYNV (78 aa). The region spanning 202 to 237 is the UVR domain; it reads DQVIIKLTERMEVASENLVFEEAAHYRDQIRQLRRL.

The protein belongs to the UvrC family. Interacts with UvrB in an incision complex.

The protein resides in the cytoplasm. In terms of biological role, the UvrABC repair system catalyzes the recognition and processing of DNA lesions. UvrC both incises the 5' and 3' sides of the lesion. The N-terminal half is responsible for the 3' incision and the C-terminal half is responsible for the 5' incision. This Coxiella burnetii (strain CbuK_Q154) (Coxiella burnetii (strain Q154)) protein is UvrABC system protein C.